A 195-amino-acid polypeptide reads, in one-letter code: Transcriptional regulator GfcR (195 aa).

The protein belongs to the purine/pyrimidine phosphoribosyltransferase family. GfcR subfamily.

The protein is Transcriptional regulator GfcR of Picrophilus torridus (strain ATCC 700027 / DSM 9790 / JCM 10055 / NBRC 100828 / KAW 2/3).